Reading from the N-terminus, the 235-residue chain is Ribonuclease P protein component 3 (235 aa).

The protein belongs to the eukaryotic/archaeal RNase P protein component 3 family. Consists of a catalytic RNA component and at least 4-5 protein subunits.

The protein localises to the cytoplasm. It carries out the reaction Endonucleolytic cleavage of RNA, removing 5'-extranucleotides from tRNA precursor.. Functionally, part of ribonuclease P, a protein complex that generates mature tRNA molecules by cleaving their 5'-ends. The sequence is that of Ribonuclease P protein component 3 from Haloarcula marismortui (strain ATCC 43049 / DSM 3752 / JCM 8966 / VKM B-1809) (Halobacterium marismortui).